The chain runs to 406 residues: Transposase for insertion sequence element IS1001 (406 aa).

The protein belongs to the transposase 12 family.

In terms of biological role, involved in the transposition of the insertion sequence. This is Transposase for insertion sequence element IS1001 (tnpA) from Bordetella parapertussis.